Reading from the N-terminus, the 92-residue chain is Small ribosomal subunit protein uS19 (92 aa).

The protein belongs to the universal ribosomal protein uS19 family.

Its function is as follows. Protein S19 forms a complex with S13 that binds strongly to the 16S ribosomal RNA. The polypeptide is Small ribosomal subunit protein uS19 (Prochlorococcus marinus (strain MIT 9312)).